A 364-amino-acid chain; its full sequence is Dual-specificity RNA methyltransferase RlmN (364 aa).

The active-site Proton acceptor is Glu-91. The 237-residue stretch at 97-333 (ESDRGTLCIS…VTVRKTRGDD (237 aa)) folds into the Radical SAM core domain. A disulfide bridge connects residues Cys-104 and Cys-338. Residues Cys-111, Cys-115, and Cys-118 each contribute to the [4Fe-4S] cluster site. S-adenosyl-L-methionine contacts are provided by residues 164 to 165 (GE), Ser-196, 218 to 220 (SLH), and Asn-295. Residue Cys-338 is the S-methylcysteine intermediate of the active site.

This sequence belongs to the radical SAM superfamily. RlmN family. [4Fe-4S] cluster is required as a cofactor.

It is found in the cytoplasm. It carries out the reaction adenosine(2503) in 23S rRNA + 2 reduced [2Fe-2S]-[ferredoxin] + 2 S-adenosyl-L-methionine = 2-methyladenosine(2503) in 23S rRNA + 5'-deoxyadenosine + L-methionine + 2 oxidized [2Fe-2S]-[ferredoxin] + S-adenosyl-L-homocysteine. It catalyses the reaction adenosine(37) in tRNA + 2 reduced [2Fe-2S]-[ferredoxin] + 2 S-adenosyl-L-methionine = 2-methyladenosine(37) in tRNA + 5'-deoxyadenosine + L-methionine + 2 oxidized [2Fe-2S]-[ferredoxin] + S-adenosyl-L-homocysteine. In terms of biological role, specifically methylates position 2 of adenine 2503 in 23S rRNA and position 2 of adenine 37 in tRNAs. m2A2503 modification seems to play a crucial role in the proofreading step occurring at the peptidyl transferase center and thus would serve to optimize ribosomal fidelity. In Neisseria meningitidis serogroup A / serotype 4A (strain DSM 15465 / Z2491), this protein is Dual-specificity RNA methyltransferase RlmN.